The following is a 169-amino-acid chain: UPF0065 protein in clcB-clcD intergenic region (169 aa).

The protein belongs to the UPF0065 (bug) family.

It is found in the periplasm. The polypeptide is UPF0065 protein in clcB-clcD intergenic region (Pseudomonas knackmussii (strain DSM 6978 / CCUG 54928 / LMG 23759 / B13)).